The primary structure comprises 123 residues: Secreted LysM effector Lys1 (123 aa).

The first 20 residues, 1-20 (MMGLAKTLLLASQLTAVVVA), serve as a signal peptide directing secretion. Residues 72-118 (KFCWVQAGNKCYQVAMENHISLADFLKWNPGAGSDCRTLWANTYACV) enclose the LysM domain.

Belongs to the secreted LysM effector family.

Its function is as follows. Might have a role in sequestration of chitin oligosaccharides (breakdown products of fungal cell walls that are released during invasion and act as triggers of host immunity) to dampen host defense. The sequence is that of Secreted LysM effector Lys1 from Pochonia chlamydosporia (strain 123) (Metacordyceps chlamydosporia).